Here is a 443-residue protein sequence, read N- to C-terminus: Exodeoxyribonuclease 7 large subunit (443 aa).

The protein belongs to the XseA family. Heterooligomer composed of large and small subunits.

It localises to the cytoplasm. It catalyses the reaction Exonucleolytic cleavage in either 5'- to 3'- or 3'- to 5'-direction to yield nucleoside 5'-phosphates.. Bidirectionally degrades single-stranded DNA into large acid-insoluble oligonucleotides, which are then degraded further into small acid-soluble oligonucleotides. The chain is Exodeoxyribonuclease 7 large subunit from Stenotrophomonas maltophilia (strain R551-3).